The sequence spans 255 residues: Triosephosphate isomerase (255 aa).

9–11 (NWK) is a binding site for substrate. The active-site Electrophile is the histidine 95. Glutamate 167 functions as the Proton acceptor in the catalytic mechanism. Substrate is bound by residues glycine 173, serine 212, and 233–234 (GG).

The protein belongs to the triosephosphate isomerase family. In terms of assembly, homodimer.

The protein localises to the cytoplasm. The catalysed reaction is D-glyceraldehyde 3-phosphate = dihydroxyacetone phosphate. It participates in carbohydrate biosynthesis; gluconeogenesis. It functions in the pathway carbohydrate degradation; glycolysis; D-glyceraldehyde 3-phosphate from glycerone phosphate: step 1/1. Involved in the gluconeogenesis. Catalyzes stereospecifically the conversion of dihydroxyacetone phosphate (DHAP) to D-glyceraldehyde-3-phosphate (G3P). The protein is Triosephosphate isomerase of Photorhabdus laumondii subsp. laumondii (strain DSM 15139 / CIP 105565 / TT01) (Photorhabdus luminescens subsp. laumondii).